Consider the following 351-residue polypeptide: Mitochondrial mRNA pseudouridine synthase RPUSD3 (351 aa).

The transit peptide at 1–25 (MRAVLAREMDGRRVLGRFWSGWRRG) directs the protein to the mitochondrion. The segment at 33-58 (EDAGFGTEARHQRQPRGSCQRSGPLG) is disordered. Ser-71 is subject to Phosphoserine.

This sequence belongs to the pseudouridine synthase RluA family. In terms of assembly, forms a regulatory protein-RNA complex, consisting of RCC1L, NGRN, RPUSD3, RPUSD4, TRUB2, FASTKD2 and 16S mt-rRNA.

The protein resides in the mitochondrion matrix. It carries out the reaction a uridine in mRNA = a pseudouridine in mRNA. In terms of biological role, catalyzes uridine to pseudouridine isomerization (pseudouridylation) of specific mitochondrial mRNAs (mt-mRNAs), a post-transcriptional modification necessary for their translation. Acts at position 390 in COXI mt-mRNA and at position 697-699 in mitochondrial COXIII mt-mRNA. As a component of a functional protein-RNA module, consisting of RCC1L, NGRN, RPUSD3, RPUSD4, TRUB2, FASTKD2 and 16S mitochondrial ribosomal RNA (16S mt-rRNA), controls 16S mt-rRNA abundance and may play a role in mitochondrial ribosome biogenesis. This Homo sapiens (Human) protein is Mitochondrial mRNA pseudouridine synthase RPUSD3.